Consider the following 522-residue polypeptide: Maturase K (522 aa).

It belongs to the intron maturase 2 family. MatK subfamily.

The protein resides in the plastid. It is found in the chloroplast. Functionally, usually encoded in the trnK tRNA gene intron. Probably assists in splicing its own and other chloroplast group II introns. The protein is Maturase K of Iris danfordiae (Danford iris).